Reading from the N-terminus, the 563-residue chain is CDKN2A-interacting protein (563 aa).

Residue A2 is modified to N-acetylalanine. Positions 19 to 126 (VETLRCEGET…KVKKRGISSS (108 aa)) constitute an XRN2-binding (XTBD) domain. 2 disordered regions span residues 122–289 (GISS…LLGS) and 304–351 (SSSE…PSLL). Position 124 is a phosphoserine (S124). The span at 147-160 (VERDHGKKSAKTDR) shows a compositional bias: basic and acidic residues. Low complexity-rich tracts occupy residues 168–216 (SSPS…SSQV) and 234–248 (SASFVSSLLKSSMNS). K177 participates in a covalent cross-link: Glycyl lysine isopeptide (Lys-Gly) (interchain with G-Cter in SUMO1). The residue at position 234 (S234) is a Phosphoserine. Over residues 249-262 (HMTQSTDNRQQSGS) the composition is skewed to polar residues. Low complexity predominate over residues 270–280 (GSSGSASQSSS). T340 carries the phosphothreonine modification. Residue S371 is modified to Phosphoserine. Positions 445-520 (NHGELLNAAI…SREALKLFLK (76 aa)) constitute a DRBM domain.

It belongs to the CARF family. In terms of assembly, interacts with CDKN2A/p14ARF, p53/TP53 and MDM2. Interacts with CHEK2 and MAPK3. Interacts with XRN2. In terms of processing, may be ubiquitinated.

The protein localises to the nucleus. It is found in the nucleoplasm. Its function is as follows. Regulates DNA damage response and cell proliferation in a dose-dependent manner through a number of signaling pathways involved in cell proliferation, apoptosis and senescence. In Mus musculus (Mouse), this protein is CDKN2A-interacting protein (Cdkn2aip).